Reading from the N-terminus, the 350-residue chain is Phenylalanine--tRNA ligase alpha subunit (350 aa).

Position 260 (E260) interacts with Mg(2+).

The protein belongs to the class-II aminoacyl-tRNA synthetase family. Phe-tRNA synthetase alpha subunit type 1 subfamily. In terms of assembly, tetramer of two alpha and two beta subunits. Requires Mg(2+) as cofactor.

Its subcellular location is the cytoplasm. The enzyme catalyses tRNA(Phe) + L-phenylalanine + ATP = L-phenylalanyl-tRNA(Phe) + AMP + diphosphate + H(+). The protein is Phenylalanine--tRNA ligase alpha subunit of Mycoplasma capricolum subsp. capricolum (strain California kid / ATCC 27343 / NCTC 10154).